Consider the following 419-residue polypeptide: Histidine--tRNA ligase (419 aa).

Belongs to the class-II aminoacyl-tRNA synthetase family. As to quaternary structure, homodimer.

The protein localises to the cytoplasm. It carries out the reaction tRNA(His) + L-histidine + ATP = L-histidyl-tRNA(His) + AMP + diphosphate + H(+). The protein is Histidine--tRNA ligase of Desulfatibacillum aliphaticivorans.